Here is a 184-residue protein sequence, read N- to C-terminus: Thylakoid membrane protein slr0575 (184 aa).

A run of 2 helical transmembrane segments spans residues 5 to 25 (ISLA…GFVA) and 31 to 51 (ATLN…GLAL).

The protein resides in the cellular thylakoid membrane. The protein is Thylakoid membrane protein slr0575 of Synechocystis sp. (strain ATCC 27184 / PCC 6803 / Kazusa).